Here is a 475-residue protein sequence, read N- to C-terminus: Ribulose bisphosphate carboxylase large chain (475 aa).

A propeptide spanning residues 1–2 (MS) is cleaved from the precursor. P3 is subject to N-acetylproline. K14 carries the post-translational modification N6,N6,N6-trimethyllysine. N123 and T173 together coordinate substrate. The active-site Proton acceptor is the K175. K177 provides a ligand contact to substrate. 3 residues coordinate Mg(2+): K201, D203, and E204. N6-carboxylysine is present on K201. The active-site Proton acceptor is the H294. 3 residues coordinate substrate: R295, H327, and S379.

Belongs to the RuBisCO large chain family. Type I subfamily. As to quaternary structure, heterohexadecamer of 8 large chains and 8 small chains; disulfide-linked. The disulfide link is formed within the large subunit homodimers. Requires Mg(2+) as cofactor. Post-translationally, the disulfide bond which can form in the large chain dimeric partners within the hexadecamer appears to be associated with oxidative stress and protein turnover.

Its subcellular location is the plastid. It localises to the chloroplast. The enzyme catalyses 2 (2R)-3-phosphoglycerate + 2 H(+) = D-ribulose 1,5-bisphosphate + CO2 + H2O. It carries out the reaction D-ribulose 1,5-bisphosphate + O2 = 2-phosphoglycolate + (2R)-3-phosphoglycerate + 2 H(+). Its function is as follows. RuBisCO catalyzes two reactions: the carboxylation of D-ribulose 1,5-bisphosphate, the primary event in carbon dioxide fixation, as well as the oxidative fragmentation of the pentose substrate in the photorespiration process. Both reactions occur simultaneously and in competition at the same active site. The polypeptide is Ribulose bisphosphate carboxylase large chain (Bouvardia ternifolia (Firecrackerbush)).